An 809-amino-acid chain; its full sequence is Protein PHOX3 (809 aa).

The disordered stretch occupies residues M1–D22. TPR repeat units follow at residues A126 to D159, S164 to H199, N200 to N233, M235 to Y265, and A274 to N311. A disordered region spans residues T288–K339. At S298 the chain carries Phosphoserine. Basic and acidic residues predominate over residues P307–K339. Positions N359–V438 constitute a PB1 domain. 3 TPR repeats span residues S508–N541, E563–C597, and S615–S648. Positions E656 to P686 are disordered. A TPR 9 repeat occupies S709–V741.

Carboxylate clamp type tetratricopeptide repeat protein that may act as a potential Hsp90/Hsp70 co-chaperone. Contributes to polar growth of root hairs. In Arabidopsis thaliana (Mouse-ear cress), this protein is Protein PHOX3.